An 868-amino-acid chain; its full sequence is Leucine--tRNA ligase (868 aa).

Positions 42–52 (PYPSGKLHMGH) match the 'HIGH' region motif. Positions 627-631 (KMSKS) match the 'KMSKS' region motif. Position 630 (Lys630) interacts with ATP.

The protein belongs to the class-I aminoacyl-tRNA synthetase family.

The protein resides in the cytoplasm. It catalyses the reaction tRNA(Leu) + L-leucine + ATP = L-leucyl-tRNA(Leu) + AMP + diphosphate. This is Leucine--tRNA ligase from Pseudomonas putida (strain ATCC 700007 / DSM 6899 / JCM 31910 / BCRC 17059 / LMG 24140 / F1).